A 242-amino-acid chain; its full sequence is Orotidine 5'-phosphate decarboxylase (242 aa).

Residues aspartate 16, lysine 37, 64–73, threonine 128, arginine 190, glutamine 199, glycine 219, and arginine 220 each bind substrate; that span reads DLKFHDIPNT. Lysine 66 acts as the Proton donor in catalysis.

Belongs to the OMP decarboxylase family. Type 1 subfamily. Homodimer.

The catalysed reaction is orotidine 5'-phosphate + H(+) = UMP + CO2. The protein operates within pyrimidine metabolism; UMP biosynthesis via de novo pathway; UMP from orotate: step 2/2. Its function is as follows. Catalyzes the decarboxylation of orotidine 5'-monophosphate (OMP) to uridine 5'-monophosphate (UMP). This chain is Orotidine 5'-phosphate decarboxylase, found in Prochlorococcus marinus (strain MIT 9215).